Consider the following 305-residue polypeptide: 4-hydroxy-tetrahydrodipicolinate synthase 1 (305 aa).

T53 contacts pyruvate. Y141 serves as the catalytic Proton donor/acceptor. Catalysis depends on K169, which acts as the Schiff-base intermediate with substrate. V209 lines the pyruvate pocket.

It belongs to the DapA family. In terms of assembly, homotetramer; dimer of dimers.

It is found in the cytoplasm. It catalyses the reaction L-aspartate 4-semialdehyde + pyruvate = (2S,4S)-4-hydroxy-2,3,4,5-tetrahydrodipicolinate + H2O + H(+). It participates in amino-acid biosynthesis; L-lysine biosynthesis via DAP pathway; (S)-tetrahydrodipicolinate from L-aspartate: step 3/4. Catalyzes the condensation of (S)-aspartate-beta-semialdehyde [(S)-ASA] and pyruvate to 4-hydroxy-tetrahydrodipicolinate (HTPA). This Streptomyces coelicolor (strain ATCC BAA-471 / A3(2) / M145) protein is 4-hydroxy-tetrahydrodipicolinate synthase 1.